A 173-amino-acid polypeptide reads, in one-letter code: ATP-dependent protease subunit HslV (173 aa).

Threonine 2 is a catalytic residue. Glycine 158, aspartate 161, and serine 164 together coordinate Na(+).

It belongs to the peptidase T1B family. HslV subfamily. As to quaternary structure, a double ring-shaped homohexamer of HslV is capped on each side by a ring-shaped HslU homohexamer. The assembly of the HslU/HslV complex is dependent on binding of ATP.

The protein localises to the cytoplasm. It catalyses the reaction ATP-dependent cleavage of peptide bonds with broad specificity.. Allosterically activated by HslU binding. In terms of biological role, protease subunit of a proteasome-like degradation complex believed to be a general protein degrading machinery. The sequence is that of ATP-dependent protease subunit HslV from Glaesserella parasuis serovar 5 (strain SH0165) (Haemophilus parasuis).